Reading from the N-terminus, the 198-residue chain is uncharacterized protein (198 aa).

The segment at 1-23 is disordered; the sequence is MYFGKTRQSDQSGRVPPNQNVTT. A compositionally biased stretch (polar residues) spans 9-23; it reads SDQSGRVPPNQNVTT. 3 residues coordinate Mo-molybdopterin: cysteine 75, histidine 144, and arginine 149.

The cofactor is Mo-molybdopterin.

This is an uncharacterized protein from Bacillus subtilis (strain 168).